The sequence spans 514 residues: Peptide chain release factor 3 (514 aa).

In terms of domain architecture, tr-type G spans 8 to 268; sequence KKRRTFAIIS…TFLEFAPEPH (261 aa). GTP is bound by residues 17–24, 85–89, and 139–142; these read SHPDAGKT, DTPGH, and NKLD.

It belongs to the TRAFAC class translation factor GTPase superfamily. Classic translation factor GTPase family. PrfC subfamily.

The protein resides in the cytoplasm. In terms of biological role, increases the formation of ribosomal termination complexes and stimulates activities of RF-1 and RF-2. It binds guanine nucleotides and has strong preference for UGA stop codons. It may interact directly with the ribosome. The stimulation of RF-1 and RF-2 is significantly reduced by GTP and GDP, but not by GMP. This Streptococcus pyogenes serotype M18 (strain MGAS8232) protein is Peptide chain release factor 3.